The following is a 207-amino-acid chain: MINLRRFTKFTLAGLTALSLLGGCSVTPKVALQPVSVENASDAKAWELKGKLLIRTNGDKVSANLFWLNTPDNAELRLTSMLGTTVLLLTQNRDGATLEVDGKRYSDLSPQRLLDGLSGFTLPIDALPFWITGQPMAGDEVEFDTLNRPKTIISADGEWTINISSWQTQSGAPVPRMLELTHASAVIKLQTNEWQALANATGSKGAR.

The N-terminal stretch at Met-1–Gly-23 is a signal peptide. A lipid anchor (N-palmitoyl cysteine) is attached at Cys-24. Cys-24 carries the S-diacylglycerol cysteine lipid modification.

The protein belongs to the LolB family. In terms of assembly, monomer.

Its subcellular location is the cell outer membrane. In terms of biological role, plays a critical role in the incorporation of lipoproteins in the outer membrane after they are released by the LolA protein. The chain is Outer-membrane lipoprotein LolB from Shewanella amazonensis (strain ATCC BAA-1098 / SB2B).